The sequence spans 446 residues: Probable D-serine dehydratase (446 aa).

Lys116 bears the N6-(pyridoxal phosphate)lysine mark.

It belongs to the serine/threonine dehydratase family. DsdA subfamily. Pyridoxal 5'-phosphate is required as a cofactor.

The catalysed reaction is D-serine = pyruvate + NH4(+). In Bacillus thuringiensis subsp. konkukian (strain 97-27), this protein is Probable D-serine dehydratase.